The following is a 326-amino-acid chain: tRNA-modifying protein YgfZ (326 aa).

Residues tryptophan 27 and tryptophan 189 each contribute to the folate site.

This sequence belongs to the tRNA-modifying YgfZ family.

Its subcellular location is the cytoplasm. In terms of biological role, folate-binding protein involved in regulating the level of ATP-DnaA and in the modification of some tRNAs. It is probably a key factor in regulatory networks that act via tRNA modification, such as initiation of chromosomal replication. This is tRNA-modifying protein YgfZ from Salmonella arizonae (strain ATCC BAA-731 / CDC346-86 / RSK2980).